A 101-amino-acid polypeptide reads, in one-letter code: MTFRYSNIAHTLFISIMCLFSIPLCFSLSIFFFLSSHSLSFAIHCYAPLSTSLHCGWPHKVDMQYFFPWSRILRPTWVGRALLSKGGVIEMLGGEAGMLGK.

A helical membrane pass occupies residues 13 to 33; sequence FISIMCLFSIPLCFSLSIFFF.

The protein resides in the membrane. This is an uncharacterized protein from Schizosaccharomyces pombe (strain 972 / ATCC 24843) (Fission yeast).